A 63-amino-acid polypeptide reads, in one-letter code: Large ribosomal subunit protein uL29 (63 aa).

Belongs to the universal ribosomal protein uL29 family.

This chain is Large ribosomal subunit protein uL29, found in Salmonella agona (strain SL483).